The following is a 201-amino-acid chain: Histone-like protein HC2 (201 aa).

Positions 1–69 (MLGVQKKCST…VAKKATAKKA (69 aa)) are disordered. Basic residues-rich tracts occupy residues 8–50 (CSTR…KTVA) and 59–69 (PVAKKATAKKA).

Belongs to the histone H1/H5 family. HCT subfamily.

Its function is as follows. Might have a role in establishing the nucleoid structure of elementary bodies. This is Histone-like protein HC2 (hctB) from Chlamydia trachomatis serovar D (strain ATCC VR-885 / DSM 19411 / UW-3/Cx).